The sequence spans 323 residues: PI-PLC X domain-containing protein 1 (323 aa).

Residues 30–206 (RLWDVPLHHL…QVIVSYEDES (177 aa)) enclose the PI-PLC X-box domain.

In terms of tissue distribution, widely expressed.

Its subcellular location is the cytoplasm. This is PI-PLC X domain-containing protein 1 (PLCXD1) from Homo sapiens (Human).